The following is a 223-amino-acid chain: Neurotrophic factor BDNF precursor form (223 aa).

An N-terminal signal peptide occupies residues 1–5 (SCMKA). Positions 6-114 (APMKEASIRG…AANMSMRVRR (109 aa)) are excised as a propeptide. The N-linked (GlcNAc...) asparagine glycan is linked to Asn-107. Disulfide bonds link Cys-127–Cys-194 and Cys-172–Cys-223.

Belongs to the NGF-beta family.

The protein localises to the secreted. In terms of biological role, promotes the survival of neuronal populations that are all located either in the central nervous system or directly connected to it. This chain is Neurotrophic factor BDNF precursor form (BDNF), found in Tropidophis haetianus (Haitian dwarf boa).